The sequence spans 137 residues: Small ribosomal subunit protein uS9 (137 aa).

The segment at 105–137 (LKAEGYLTRDPRAKERKKYGLHKARKAPQYSKR) is disordered. Over residues 118 to 137 (KERKKYGLHKARKAPQYSKR) the composition is skewed to basic residues.

This sequence belongs to the universal ribosomal protein uS9 family.

The polypeptide is Small ribosomal subunit protein uS9 (rpsI) (Synechocystis sp. (strain ATCC 27184 / PCC 6803 / Kazusa)).